Reading from the N-terminus, the 205-residue chain is Protein N-terminal glutamine amidohydrolase (205 aa).

Active-site residues include Cys20, His74, and Asp90.

Belongs to the NTAQ1 family. Monomer.

It catalyses the reaction N-terminal L-glutaminyl-[protein] + H2O = N-terminal L-glutamyl-[protein] + NH4(+). Its function is as follows. Mediates the side-chain deamidation of N-terminal glutamine residues to glutamate, an important step in N-end rule pathway of protein degradation. Conversion of the resulting N-terminal glutamine to glutamate renders the protein susceptible to arginylation, polyubiquitination and degradation as specified by the N-end rule. Does not act on substrates with internal or C-terminal glutamine and does not act on non-glutamine residues in any position. In Drosophila melanogaster (Fruit fly), this protein is Protein N-terminal glutamine amidohydrolase (tun).